The following is a 196-amino-acid chain: ATP-dependent Clp protease proteolytic subunit 1 (196 aa).

The active-site Nucleophile is Ser-96. His-121 is an active-site residue.

This sequence belongs to the peptidase S14 family. As to quaternary structure, fourteen ClpP subunits assemble into 2 heptameric rings which stack back to back to give a disk-like structure with a central cavity, resembling the structure of eukaryotic proteasomes.

The protein resides in the cytoplasm. The enzyme catalyses Hydrolysis of proteins to small peptides in the presence of ATP and magnesium. alpha-casein is the usual test substrate. In the absence of ATP, only oligopeptides shorter than five residues are hydrolyzed (such as succinyl-Leu-Tyr-|-NHMec, and Leu-Tyr-Leu-|-Tyr-Trp, in which cleavage of the -Tyr-|-Leu- and -Tyr-|-Trp bonds also occurs).. In terms of biological role, cleaves peptides in various proteins in a process that requires ATP hydrolysis. Has a chymotrypsin-like activity. Plays a major role in the degradation of misfolded proteins. The protein is ATP-dependent Clp protease proteolytic subunit 1 of Prochlorococcus marinus subsp. pastoris (strain CCMP1986 / NIES-2087 / MED4).